The chain runs to 327 residues: Ribosomal RNA small subunit methyltransferase H (327 aa).

S-adenosyl-L-methionine-binding positions include 42–44 (GGH), aspartate 61, leucine 95, aspartate 109, and glutamine 116.

This sequence belongs to the methyltransferase superfamily. RsmH family.

The protein resides in the cytoplasm. The enzyme catalyses cytidine(1402) in 16S rRNA + S-adenosyl-L-methionine = N(4)-methylcytidine(1402) in 16S rRNA + S-adenosyl-L-homocysteine + H(+). Specifically methylates the N4 position of cytidine in position 1402 (C1402) of 16S rRNA. The sequence is that of Ribosomal RNA small subunit methyltransferase H from Desulfovibrio desulfuricans (strain ATCC 27774 / DSM 6949 / MB).